We begin with the raw amino-acid sequence, 670 residues long: tRNA 5-methylaminomethyl-2-thiouridine biosynthesis bifunctional protein MnmC (670 aa).

Positions 1-245 (MKPIAIQPAS…KREMLTGALS (245 aa)) are tRNA (mnm(5)s(2)U34)-methyltransferase. The interval 271-670 (VGGGIASALL…RKLLKGRAAS (400 aa)) is FAD-dependent cmnm(5)s(2)U34 oxidoreductase.

In the N-terminal section; belongs to the methyltransferase superfamily. tRNA (mnm(5)s(2)U34)-methyltransferase family. It in the C-terminal section; belongs to the DAO family. It depends on FAD as a cofactor.

The protein resides in the cytoplasm. The enzyme catalyses 5-aminomethyl-2-thiouridine(34) in tRNA + S-adenosyl-L-methionine = 5-methylaminomethyl-2-thiouridine(34) in tRNA + S-adenosyl-L-homocysteine + H(+). Functionally, catalyzes the last two steps in the biosynthesis of 5-methylaminomethyl-2-thiouridine (mnm(5)s(2)U) at the wobble position (U34) in tRNA. Catalyzes the FAD-dependent demodification of cmnm(5)s(2)U34 to nm(5)s(2)U34, followed by the transfer of a methyl group from S-adenosyl-L-methionine to nm(5)s(2)U34, to form mnm(5)s(2)U34. This Cronobacter sakazakii (strain ATCC BAA-894) (Enterobacter sakazakii) protein is tRNA 5-methylaminomethyl-2-thiouridine biosynthesis bifunctional protein MnmC.